Reading from the N-terminus, the 33-residue chain is Gaegurin-1 (33 aa).

A disulfide bridge links cysteine 27 with cysteine 33.

Belongs to the frog skin active peptide (FSAP) family. Brevinin subfamily. As to quaternary structure, monomer. In terms of tissue distribution, expressed by the skin glands.

The protein resides in the secreted. Functionally, has a non-hemolytic activity. Has a broad spectrum of activity against both Gram-positive and Gram-negative bacteria, fungi and protozoa. In Glandirana rugosa (Japanese wrinkled frog), this protein is Gaegurin-1 (GGN1).